Reading from the N-terminus, the 229-residue chain is Prolactin (229 aa).

Residues 1–30 (MDSKGSAQKGSRLLLLLVVSNLLLCQGVVS) form the signal peptide. A disulfide bridge links cysteine 34 with cysteine 41. Serine 56 is modified (phosphoserine). Residue asparagine 61 is glycosylated (N-linked (GlcNAc...) asparagine; partial). Serine 64 and serine 120 each carry phosphoserine. 2 disulfide bridges follow: cysteine 88-cysteine 204 and cysteine 221-cysteine 229.

It belongs to the somatotropin/prolactin family. As to quaternary structure, interacts with PRLR.

It localises to the secreted. Its function is as follows. Prolactin acts primarily on the mammary gland by promoting lactation, mammogenesis, mitogenesis and osmoregulation. The sequence is that of Prolactin (PRL) from Ovis aries (Sheep).